The chain runs to 112 residues: cAMP-regulated phosphoprotein 19 (112 aa).

Low complexity predominate over residues methionine 1–alanine 11. The tract at residues methionine 1–leucine 49 is disordered. Basic and acidic residues predominate over residues glutamate 12–leucine 32. Phosphoserine; by GWL occurs at positions 62 and 104. Positions methionine 72–glycine 112 are disordered. The residue at position 104 (serine 104) is a Phosphoserine; by PKA.

Belongs to the endosulfine family. In terms of assembly, interacts (when phosphorylated at Ser-62) with PPP2R2D. In terms of processing, phosphorylation at Ser-62 by MASTL/GWL during mitosis is essential for interaction with PPP2R2D (PR55-delta) and subsequent inactivation of PP2A.

It localises to the cytoplasm. Its function is as follows. Protein phosphatase inhibitor that specifically inhibits protein phosphatase 2A (PP2A) during mitosis. Inhibition of PP2A is enhanced when ARPP19 is phosphorylated. When phosphorylated at Ser-62 during mitosis, specifically interacts with PPP2R2D (PR55-delta) and inhibits its activity, leading to inactivation of PP2A, an essential condition to keep cyclin-B1-CDK1 activity high during M phase. This is cAMP-regulated phosphoprotein 19 (ARPP19) from Taeniopygia guttata (Zebra finch).